The chain runs to 136 residues: Large ribosomal subunit protein bL21 (136 aa).

The tract at residues 107 to 136 is disordered; it reads RAAADRKTAPKRASAKAAADQTTAAQATAE. Low complexity predominate over residues 121–136; sequence AKAAADQTTAAQATAE.

This sequence belongs to the bacterial ribosomal protein bL21 family. As to quaternary structure, part of the 50S ribosomal subunit. Contacts protein L20.

This protein binds to 23S rRNA in the presence of protein L20. This chain is Large ribosomal subunit protein bL21, found in Acidothermus cellulolyticus (strain ATCC 43068 / DSM 8971 / 11B).